The chain runs to 198 residues: uncharacterized protein (198 aa).

The interval methionine 1–threonine 23 is disordered. The span at serine 9–threonine 23 shows a compositional bias: polar residues. Positions 75, 144, and 149 each coordinate Mo-molybdopterin.

It depends on Mo-molybdopterin as a cofactor.

This is an uncharacterized protein from Bacillus subtilis (strain 168).